We begin with the raw amino-acid sequence, 126 residues long: Large ribosomal subunit protein bL12 (126 aa).

It belongs to the bacterial ribosomal protein bL12 family. Homodimer. Part of the ribosomal stalk of the 50S ribosomal subunit. Forms a multimeric L10(L12)X complex, where L10 forms an elongated spine to which 2 to 4 L12 dimers bind in a sequential fashion. Binds GTP-bound translation factors.

In terms of biological role, forms part of the ribosomal stalk which helps the ribosome interact with GTP-bound translation factors. Is thus essential for accurate translation. The polypeptide is Large ribosomal subunit protein bL12 (Tropheryma whipplei (strain TW08/27) (Whipple's bacillus)).